We begin with the raw amino-acid sequence, 122 residues long: MARIAGVNIPTNKRVLIALQYIHGIGQKIAGEILEKVKIPVDRRVSQLSDAEVLQIREVIDRDYLVEGDLRREVGINIKRLMDLGCYRGLRHRRGLPVRGQRTHTNARTRKGPAKAIAGKKK.

Positions Arg-99–Lys-122 are disordered.

Belongs to the universal ribosomal protein uS13 family. Part of the 30S ribosomal subunit. Forms a loose heterodimer with protein S19. Forms two bridges to the 50S subunit in the 70S ribosome.

Functionally, located at the top of the head of the 30S subunit, it contacts several helices of the 16S rRNA. In the 70S ribosome it contacts the 23S rRNA (bridge B1a) and protein L5 of the 50S subunit (bridge B1b), connecting the 2 subunits; these bridges are implicated in subunit movement. Contacts the tRNAs in the A and P-sites. The sequence is that of Small ribosomal subunit protein uS13 from Bradyrhizobium diazoefficiens (strain JCM 10833 / BCRC 13528 / IAM 13628 / NBRC 14792 / USDA 110).